Reading from the N-terminus, the 147-residue chain is Ubiquitin-conjugating enzyme E2 D3 (147 aa).

The region spanning methionine 1–methionine 147 is the UBC core domain. Cysteine 21 and cysteine 107 form a disulfide bridge. Cysteine 85 functions as the Glycyl thioester intermediate in the catalytic mechanism.

The protein belongs to the ubiquitin-conjugating enzyme family. In terms of assembly, interacts with SCF (SKP1-CUL1-F-box protein) E3 ubiquitin ligase complex; when Cullin is neddylated, the interaction between the E2 and the SCF complex is strengthened. Interacts with DAPK3. Interacts with BRCA1; the DNA damage checkpoint promotes the association with BRCA1 after ionizing radiation. Interacts non-covalently with ubiquitin. Interacts with E3 ubiquitin-protein ligase CBLC. Interacts with UBTD1. Interacts with RIGI and RNF135; involved in RIGI ubiquitination and activation. Phosphorylated by AURKB.

The protein resides in the cell membrane. It localises to the endosome membrane. It catalyses the reaction S-ubiquitinyl-[E1 ubiquitin-activating enzyme]-L-cysteine + [E2 ubiquitin-conjugating enzyme]-L-cysteine = [E1 ubiquitin-activating enzyme]-L-cysteine + S-ubiquitinyl-[E2 ubiquitin-conjugating enzyme]-L-cysteine.. The enzyme catalyses S-ubiquitinyl-[E1 ubiquitin-activating enzyme]-L-cysteine + [acceptor protein]-L-lysine = [E1 ubiquitin-activating enzyme]-L-cysteine + N(6)-monoubiquitinyl-[acceptor protein]-L-lysine.. It participates in protein modification; protein ubiquitination. Its function is as follows. Accepts ubiquitin from the E1 complex and catalyzes its covalent attachment to other proteins. In vitro catalyzes 'Lys-11'-, as well as 'Lys-48'-linked polyubiquitination. Cooperates with the E2 CDC34 and the SCF(FBXW11) E3 ligase complex for the polyubiquitination of NFKBIA leading to its subsequent proteasomal degradation. Acts as an initiator E2, priming the phosphorylated NFKBIA target at positions 'Lys-21' and/or 'Lys-22' with a monoubiquitin. Ubiquitin chain elongation is then performed by CDC34, building ubiquitin chains from the UBE2D3-primed NFKBIA-linked ubiquitin. Also acts as an initiator E2, in conjunction with RNF8, for the priming of PCNA. Monoubiquitination of PCNA, and its subsequent polyubiquitination, are essential events in the operation of the DNA damage tolerance (DDT) pathway that is activated after DNA damage caused by UV or chemical agents during S-phase. Associates with the BRCA1/BARD1 E3 ligase complex to perform ubiquitination at DNA damage sites following ionizing radiation leading to DNA repair. Targets DAPK3 for ubiquitination which influences promyelocytic leukemia protein nuclear body (PML-NB) formation in the nucleus. In conjunction with the MDM2 and TOPORS E3 ligases, functions ubiquitination of p53/TP53. In conjunction with the CBL E3 ligase, targets EGFR for polyubiquitination at the plasma membrane as well as during its internalization and transport on endosomes. In conjunction with the STUB1 E3 quality control E3 ligase, ubiquitinates unfolded proteins to catalyze their immediate destruction. Together with RNF135, catalyzes the viral RNA-dependent 'Lys-63'-linked polyubiquitination of RIGI to activate the downstream signaling pathway that leads to interferon beta production. Together with ZNF598, catalyzes ubiquitination of 40S ribosomal proteins in response to ribosome collisions. In cooperation with the GATOR2 complex, catalyzes 'Lys-6'-linked ubiquitination of NPRL2. The protein is Ubiquitin-conjugating enzyme E2 D3 (UBE2D3) of Homo sapiens (Human).